The primary structure comprises 177 residues: Alkyl hydroperoxide reductase AhpD (177 aa).

Residue Cys-130 is the Proton donor of the active site. Residues Cys-130 and Cys-133 are joined by a disulfide bond. The active-site Cysteine sulfenic acid (-SOH) intermediate is Cys-133.

Belongs to the AhpD family. As to quaternary structure, homotrimer.

The enzyme catalyses N(6)-[(R)-dihydrolipoyl]-L-lysyl-[lipoyl-carrier protein] + a hydroperoxide = N(6)-[(R)-lipoyl]-L-lysyl-[lipoyl-carrier protein] + an alcohol + H2O. Its function is as follows. Antioxidant protein with alkyl hydroperoxidase activity. Required for the reduction of the AhpC active site cysteine residues and for the regeneration of the AhpC enzyme activity. The polypeptide is Alkyl hydroperoxide reductase AhpD (Mycobacterium bovis (strain ATCC BAA-935 / AF2122/97)).